The chain runs to 571 residues: Proline--tRNA ligase (571 aa).

This sequence belongs to the class-II aminoacyl-tRNA synthetase family. ProS type 1 subfamily. As to quaternary structure, homodimer.

It localises to the cytoplasm. It catalyses the reaction tRNA(Pro) + L-proline + ATP = L-prolyl-tRNA(Pro) + AMP + diphosphate. In terms of biological role, catalyzes the attachment of proline to tRNA(Pro) in a two-step reaction: proline is first activated by ATP to form Pro-AMP and then transferred to the acceptor end of tRNA(Pro). As ProRS can inadvertently accommodate and process non-cognate amino acids such as alanine and cysteine, to avoid such errors it has two additional distinct editing activities against alanine. One activity is designated as 'pretransfer' editing and involves the tRNA(Pro)-independent hydrolysis of activated Ala-AMP. The other activity is designated 'posttransfer' editing and involves deacylation of mischarged Ala-tRNA(Pro). The misacylated Cys-tRNA(Pro) is not edited by ProRS. The sequence is that of Proline--tRNA ligase from Photobacterium profundum (strain SS9).